Consider the following 66-residue polypeptide: MKLMWLLFLCVLAFSIAQIYISDPCAGGVHRCYEPCEKKKCRLPHKCINGRCTCYVGRNVCAISSH.

The first 17 residues, 1 to 17 (MKLMWLLFLCVLAFSIA), serve as a signal peptide directing secretion.

Belongs to the short scorpion toxin superfamily. Potassium channel inhibitor family. Alpha-KTx 27 subfamily. In terms of processing, contains 4 disulfide bonds. Expressed by the venom gland.

It localises to the secreted. The protein is Potassium channel toxin alpha-KTx 27.3 of Lychas mucronatus (Chinese swimming scorpion).